The following is a 127-amino-acid chain: Probable 4-amino-4-deoxy-L-arabinose-phosphoundecaprenol flippase subunit ArnF (127 aa).

Residues 1–2 (MG) lie on the Cytoplasmic side of the membrane. The helical transmembrane segment at 3–23 (LLFALGSVVLVSAAQLLLKWA) threads the bilayer. Topologically, residues 24-47 (MIQLPDISQLPQFLSSLSQFPLPT) are periplasmic. The helical transmembrane segment at 48–68 (AALFLGLLAYALSMLCWLLAL) threads the bilayer. Over 69-76 (KRLPLSRA) the chain is Cytoplasmic. The helical transmembrane segment at 77-97 (YPLLSLSYLLVWLAALWLPGL) threads the bilayer. The Periplasmic segment spans residues 98 to 102 (NEVFR). Residues 103 to 123 (WGKLAGAGLIVSGLLLICWPA) form a helical membrane-spanning segment. The Cytoplasmic portion of the chain corresponds to 124 to 127 (AKTR).

It belongs to the ArnF family. Heterodimer of ArnE and ArnF.

The protein resides in the cell inner membrane. The protein operates within bacterial outer membrane biogenesis; lipopolysaccharide biosynthesis. In terms of biological role, translocates 4-amino-4-deoxy-L-arabinose-phosphoundecaprenol (alpha-L-Ara4N-phosphoundecaprenol) from the cytoplasmic to the periplasmic side of the inner membrane. In Erwinia tasmaniensis (strain DSM 17950 / CFBP 7177 / CIP 109463 / NCPPB 4357 / Et1/99), this protein is Probable 4-amino-4-deoxy-L-arabinose-phosphoundecaprenol flippase subunit ArnF.